The sequence spans 966 residues: Alanine--tRNA ligase (966 aa).

Histidine 646, histidine 650, cysteine 750, and histidine 754 together coordinate Zn(2+). The tract at residues 927-949 is disordered; the sequence is DRLGGGGGGRPSLASAGGRDPEA.

The protein belongs to the class-II aminoacyl-tRNA synthetase family. It depends on Zn(2+) as a cofactor.

Its subcellular location is the cytoplasm. The catalysed reaction is tRNA(Ala) + L-alanine + ATP = L-alanyl-tRNA(Ala) + AMP + diphosphate. Its function is as follows. Catalyzes the attachment of alanine to tRNA(Ala) in a two-step reaction: alanine is first activated by ATP to form Ala-AMP and then transferred to the acceptor end of tRNA(Ala). Also edits incorrectly charged Ser-tRNA(Ala) and Gly-tRNA(Ala) via its editing domain. In Salinibacter ruber (strain DSM 13855 / M31), this protein is Alanine--tRNA ligase.